The chain runs to 428 residues: Glutamate-1-semialdehyde 2,1-aminomutase (428 aa).

The residue at position 265 (K265) is an N6-(pyridoxal phosphate)lysine.

It belongs to the class-III pyridoxal-phosphate-dependent aminotransferase family. HemL subfamily. Homodimer. The cofactor is pyridoxal 5'-phosphate.

It localises to the cytoplasm. The catalysed reaction is (S)-4-amino-5-oxopentanoate = 5-aminolevulinate. It functions in the pathway porphyrin-containing compound metabolism; protoporphyrin-IX biosynthesis; 5-aminolevulinate from L-glutamyl-tRNA(Glu): step 2/2. This chain is Glutamate-1-semialdehyde 2,1-aminomutase, found in Ruthia magnifica subsp. Calyptogena magnifica.